The primary structure comprises 683 residues: Solute carrier family 28 member 3 (683 aa).

Residues 1-71 (MSAFKARGVE…EEEEEGEEDQ (71 aa)) form a disordered region. Residues 1 to 97 (MSAFKARGVE…FYKRNKKIIH (97 aa)) lie on the Cytoplasmic side of the membrane. Acidic residues predominate over residues 60-71 (DNEEEEEGEEDQ). The helical transmembrane segment at 98–118 (YTFLGLLLVGYFALVIAACIV) threads the bilayer. The Extracellular portion of the chain corresponds to 119–123 (NFKQS). A helical transmembrane segment spans residues 124 to 144 (LALLVLTLIAIFFFFWDLFIA). At 145 to 168 (KYGDKIAEALKPCQKFLDNHWSII) the chain is on the cytoplasmic side. A helical membrane pass occupies residues 169–189 (RWFVYGALLLAVILWLTLDTA). The Extracellular portion of the chain corresponds to 190–192 (KRG). The helical transmembrane segment at 193–214 (ANQVIPFFGLILYILLVFIFSK) threads the bilayer. The Cytoplasmic segment spans residues 215–222 (HPTKVRWR). A helical membrane pass occupies residues 223 to 242 (IVIWGLLLQFIFGLIILRTK). At 243 to 279 (PGLDAFNWLGIQVQTFLKYTDAGSRFLFGDDFQDHFF) the chain is on the extracellular side. Residues 280–300 (AFAVLPIVIFFSTVMSMMYYL) form a helical membrane-spanning segment. The Cytoplasmic portion of the chain corresponds to 301–324 (GLMQWLILKVGWLMQITMGTSPME). An intramembrane region (helical) is located at residues 325-343 (SMVSAGNIFVGQTESPLLI). Topologically, residues 344 to 356 (RPYLADLTISEMH) are cytoplasmic. Residues 357–379 (SVMSSGFATIAGSVLGAYISLGI) form a helical membrane-spanning segment. At 380-381 (PA) the chain is on the extracellular side. The chain crosses the membrane as a helical span at residues 382–403 (AHLLTASVMSAPAALAISKTFW). The Cytoplasmic segment spans residues 404–438 (PETKKSKNSTQTSIKLEKGQENNLVEAASQGASAA). A helical transmembrane segment spans residues 439 to 464 (VPLVANIAANLIAFLAVLAFINATLS). Topologically, residues 465–502 (WLGSMFNYPQFSFEIICSYVLMPFAFMMGVNYDDSFLV) are extracellular. Residues 503 to 522 (AELLGMKTFFNEFVAYQRLS) constitute an intramembrane region (helical). Over 523–561 (EYIHNRESGGPLFVDGVRQYMSVRSEAIATYALCGFANF) the chain is Extracellular. The helical transmembrane segment at 562-572 (GSLGIMIGGLS) threads the bilayer. Residues 573 to 585 (SLAPHRKSDIASC) are Cytoplasmic-facing. The chain crosses the membrane as a helical span at residues 586 to 608 (GIRALIAGTIACFSTACIAGVLY). The Extracellular segment spans residues 609–683 (IPELYCPNLL…GFNCSEVRPE (75 aa)).

It belongs to the concentrative nucleoside transporter (CNT) (TC 2.A.41) family. Homotrimer.

It localises to the cell membrane. The enzyme catalyses thymidine(out) + 2 Na(+)(out) = thymidine(in) + 2 Na(+)(in). It carries out the reaction cytidine(out) + 2 Na(+)(out) = cytidine(in) + 2 Na(+)(in). The catalysed reaction is uridine(out) + 2 Na(+)(out) = uridine(in) + 2 Na(+)(in). It catalyses the reaction adenosine(out) + 2 Na(+)(out) = adenosine(in) + 2 Na(+)(in). The enzyme catalyses guanosine(out) + 2 Na(+)(out) = guanosine(in) + 2 Na(+)(in). It carries out the reaction inosine(out) + 2 Na(+)(out) = inosine(in) + 2 Na(+)(in). Its function is as follows. Sodium-dependent, pyrimidine- and purine-selective. Involved in the homeostasis of endogenous nucleosides. Exhibits the transport characteristics of the nucleoside transport system cib or N3 subtype (N3/cib) (with marked transport of both thymidine and inosine). Employs a 2:1 sodium/nucleoside ratio. Also able to transport gemcitabine, 3'-azido-3'-deoxythymidine (AZT), ribavirin and 3-deazauridine. The polypeptide is Solute carrier family 28 member 3 (SLC28A3) (Eptatretus stoutii (Pacific hagfish)).